Here is a 149-residue protein sequence, read N- to C-terminus: C-type lectin domain family 2 member B (149 aa).

Over 1–7 (MMTKHKK) the chain is Cytoplasmic. A helical; Signal-anchor for type II membrane protein membrane pass occupies residues 8-25 (CFIIVGVLITTNIITLIV). Residues 26 to 149 (KLTRDSQSLC…RKWICRKRIH (124 aa)) lie on the Extracellular side of the membrane. Cys-35 and Cys-46 form a disulfide bridge. Residues 42-145 (FQNKCYYFSK…CYTERKWICR (104 aa)) form the C-type lectin domain. N-linked (GlcNAc...) asparagine glycans are attached at residues Asn-57, Asn-62, and Asn-100. Cystine bridges form between Cys-63-Cys-144 and Cys-123-Cys-136.

In terms of assembly, homodimer. Interacts with NKp80/KLRF1. (Microbial infection) Ubiquitinated by human herpesvirus 8 protein K5, leading to endolysosomal degradation. In terms of processing, N-linked glycosylated; required to enable surface expression and the extent of surface expression correlates with the number of functional conventional N-glycosylation sites. In terms of tissue distribution, expressed preferentially in lymphoid tissues, and in most hematopoietic cell types.

It is found in the cell membrane. Its subcellular location is the golgi apparatus membrane. In terms of biological role, membrane-bound protein expressed on myeloid cells which acts as a ligand to stimulate the activating receptor NKp80/KLRF1, expressed on the surface of natural killer (NK) cells. In turn, stimulates NK-cell cytotoxicity and cytokine production leading to the cytolysis of malignant CLEC2B-expressing myeloid cells. This chain is C-type lectin domain family 2 member B (CLEC2B), found in Homo sapiens (Human).